A 240-amino-acid chain; its full sequence is Sulfite dehydrogenase subunit B (240 aa).

4Fe-4S ferredoxin-type domains follow at residues 4–34 (LALV…WAGP), 64–95 (TETV…KRPD), and 97–126 (GVVL…LDAQ). [4Fe-4S] cluster contacts are provided by C13, C16, C19, C23, C73, C76, C81, C85, C106, C109, C112, and C116.

As to quaternary structure, forms a heterotrimeric membrane-bound complex composed of a catalytic heterodimer (SoeAB) and a membrane anchor protein (SoeC). [4Fe-4S] cluster is required as a cofactor.

The protein localises to the cell inner membrane. Part of the SoeABC complex that catalyzes the oxidation of sulfite to sulfate. SoeB is probably the electron transfer subunit. The protein is Sulfite dehydrogenase subunit B of Allochromatium vinosum (strain ATCC 17899 / DSM 180 / NBRC 103801 / NCIMB 10441 / D) (Chromatium vinosum).